The sequence spans 938 residues: Probable glutamyl endopeptidase, chloroplastic (938 aa).

A chloroplast-targeting transit peptide spans 1–54 (MSSLTILLQRACLRFALLPVPPLRAPLRPPRRPLGLPRRSAMSSSAASRLSHIV). A compositionally biased stretch (low complexity) spans 58–76 (GGAAGESSEPPAAAAAASG). A disordered region spans residues 58–77 (GGAAGESSEPPAAAAAASGL). Residues Ser762, Asp836, and His870 each act as charge relay system in the active site. Positions 897–913 (SSKTDSDSVADTENKTV) are enriched in polar residues. Residues 897 to 938 (SSKTDSDSVADTENKTVSASGGGAPCEGPEAEGFSSMQRSLL) are disordered.

This sequence belongs to the peptidase S9D family.

It is found in the plastid. It localises to the chloroplast stroma. In terms of biological role, serine-type protease active in vitro against the LHCII N-terminal. Cleaves its substrate on the carboxy-side of Glu residues. This chain is Probable glutamyl endopeptidase, chloroplastic (GEP), found in Oryza sativa subsp. japonica (Rice).